Reading from the N-terminus, the 1118-residue chain is Sodium-driven chloride bicarbonate exchanger (1118 aa).

Disordered regions lie at residues 1–23 (MEIKDQGAQMEPLLPTRNDEEAV), 58–96 (GRKSHRRHRHRGHKHRKRDRERDSGLEDGRESPSFDTPS), 245–312 (KQSE…PPHQ), and 457–476 (NGTAAHGEAEPHGGHSGPEL). Residues 1–509 (MEIKDQGAQM…DFRDAFSLQC (509 aa)) are Cytoplasmic-facing. The segment covering 59–76 (RKSHRRHRHRGHKHRKRD) has biased composition (basic residues). The span at 77–90 (RERDSGLEDGRESP) shows a compositional bias: basic and acidic residues. At S89 the chain carries Phosphoserine. T94 bears the Phosphothreonine mark. Polar residues predominate over residues 248-264 (EPNSMDKNAGQVVSPQS). At S276 the chain carries Phosphoserine. The helical transmembrane segment at 510–530 (LASFLFLYCACMSPVITFGGL) threads the bilayer. Residues 531 to 538 (LGEATEGR) lie on the Extracellular side of the membrane. Residues 539-559 (ISAIESLFGASMTGIAYSLFG) traverse the membrane as a helical segment. Residues 560–562 (GQP) are Cytoplasmic-facing. Residues 563-583 (LTILGSTGPVLVFEKILFKFC) traverse the membrane as a helical segment. Residues 584-596 (KEYGLSYLSLRAS) lie on the Extracellular side of the membrane. A helical transmembrane segment spans residues 597-617 (IGLWTATLCIILVATDASSLV). Residues 618 to 626 (CYITRFTEE) are Cytoplasmic-facing. A helical membrane pass occupies residues 627 to 647 (AFASLICIIFIYEALEKLFEL). Residues 648-720 (SEAYPINMHN…VGRACGHDHP (73 aa)) lie on the Extracellular side of the membrane. N-linked (GlcNAc...) asparagine glycosylation is found at N674, N677, N687, and N697. A helical transmembrane segment spans residues 721 to 741 (YVPDVLFWSVILFFSTVTLSA). Topologically, residues 742–762 (TLKQFKTSRYFPTKVRSIVSD) are cytoplasmic. A helical transmembrane segment spans residues 763-783 (FAVFLTILCMVLIDYAIGIPS). Topologically, residues 784–809 (PKLQVPSVFKPTRDDRGWFVTPLGPN) are extracellular. A helical membrane pass occupies residues 810-830 (PWWTVIAAIIPALLCTILIFM). The Cytoplasmic segment spans residues 831–855 (DQQITAVIINRKEHKLKKGCGYHLD). Residues 856–876 (LLMVAVMLGVCSIMGLPWFVA) traverse the membrane as a helical segment. The Extracellular segment spans residues 877–912 (ATVLSITHVNSLKLESECSAPGEQPKFLGIREQRVT). Residues 913 to 933 (GLMIFILMGSSVFMTSILKFI) traverse the membrane as a helical segment. The Cytoplasmic portion of the chain corresponds to 934–935 (PM). A helical membrane pass occupies residues 936-956 (PVLYGVFLYMGASSLKGIQFF). Over 957-998 (DRIKLFWMPAKHQPDFIYLRHVPLRKVHLFTIIQMSCLGLLW) the chain is Extracellular. Residues 999–1019 (IIKVSRAAIVFPMMVLALVFV) form a helical membrane-spanning segment. Residues 1020-1118 (RKLMDLLFTK…SSFPSKSSPS (99 aa)) lie on the Cytoplasmic side of the membrane. Residues S1057 and S1085 each carry the phosphoserine modification.

It belongs to the anion exchanger (TC 2.A.31) family. As to expression, predominantly expressed in the brain.

The protein resides in the basolateral cell membrane. It is found in the apical cell membrane. It localises to the cell projection. Its subcellular location is the dendrite. The protein localises to the axon. The protein resides in the perikaryon. It is found in the presynapse. It localises to the postsynapse. The enzyme catalyses 2 hydrogencarbonate(out) + chloride(in) + Na(+)(out) = 2 hydrogencarbonate(in) + chloride(out) + Na(+)(in). Functionally, sodium/bicarbonate cotransporter which plays an important role in regulating intracellular pH. Has been shown to act as a sodium/bicarbonate cotransporter in exchange for intracellular chloride. Has also been shown to act as a sodium/biocarbonate cotransporter which does not couple net influx of bicarbonate to net efflux of chloride, with the observed chloride efflux being due to chloride self-exchange. Controls neuronal pH and may contribute to the secretion of cerebrospinal fluid. Acting on presynaptic intracellular pH, it promotes GABA release, reduces the excitability of CA1 pyramidal neurons, and modulates short-term synaptic plasticity. Required in retinal cells to maintain normal pH which is necessary for normal vision. In the kidney, likely to mediate bicarbonate reclamation in the apical membrane of the proximal tubules. The chain is Sodium-driven chloride bicarbonate exchanger from Homo sapiens (Human).